The sequence spans 341 residues: Tubulin beta chain (341 aa).

Residues Ser-64, Gly-68, Thr-69, Gly-70, Asn-130, and Asn-152 each coordinate GTP.

It belongs to the tubulin family. As to quaternary structure, dimer of alpha and beta chains. A typical microtubule is a hollow water-filled tube with an outer diameter of 25 nm and an inner diameter of 15 nM. Alpha-beta heterodimers associate head-to-tail to form protofilaments running lengthwise along the microtubule wall with the beta-tubulin subunit facing the microtubule plus end conferring a structural polarity. Microtubules usually have 13 protofilaments but different protofilament numbers can be found in some organisms and specialized cells. Mg(2+) is required as a cofactor.

Its subcellular location is the cytoplasm. The protein localises to the cytoskeleton. Tubulin is the major constituent of microtubules, a cylinder consisting of laterally associated linear protofilaments composed of alpha- and beta-tubulin heterodimers. Microtubules grow by the addition of GTP-tubulin dimers to the microtubule end, where a stabilizing cap forms. Below the cap, tubulin dimers are in GDP-bound state, owing to GTPase activity of alpha-tubulin. In Haliotis discus (Abalone), this protein is Tubulin beta chain.